Consider the following 327-residue polypeptide: Phenylalanine--tRNA ligase alpha subunit (327 aa).

E252 is a binding site for Mg(2+).

This sequence belongs to the class-II aminoacyl-tRNA synthetase family. Phe-tRNA synthetase alpha subunit type 1 subfamily. As to quaternary structure, tetramer of two alpha and two beta subunits. It depends on Mg(2+) as a cofactor.

It is found in the cytoplasm. It catalyses the reaction tRNA(Phe) + L-phenylalanine + ATP = L-phenylalanyl-tRNA(Phe) + AMP + diphosphate + H(+). This chain is Phenylalanine--tRNA ligase alpha subunit, found in Haemophilus ducreyi (strain 35000HP / ATCC 700724).